The following is a 141-amino-acid chain: Large ribosomal subunit protein uL11 (141 aa).

The protein belongs to the universal ribosomal protein uL11 family. As to quaternary structure, part of the ribosomal stalk of the 50S ribosomal subunit. Interacts with L10 and the large rRNA to form the base of the stalk. L10 forms an elongated spine to which L12 dimers bind in a sequential fashion forming a multimeric L10(L12)X complex. Post-translationally, one or more lysine residues are methylated.

Its function is as follows. Forms part of the ribosomal stalk which helps the ribosome interact with GTP-bound translation factors. The chain is Large ribosomal subunit protein uL11 from Streptococcus mutans serotype c (strain ATCC 700610 / UA159).